A 166-amino-acid chain; its full sequence is P2Y purinoceptor 2 (166 aa).

Residues 1–24 are Cytoplasmic-facing; it reads VHRCLGVLRPLHSLRWGRARYARR. A helical membrane pass occupies residues 25–45; sequence VAAVVWVLVLACQAPVLYFVT. Over 46–72 the chain is Extracellular; that stretch reads TSVRGTRITCHDTSARELFSHFVAYSS. The helical transmembrane segment at 73–93 threads the bilayer; it reads VMLSLLFAVPFSVILVCYVLM. Over 94–115 the chain is Cytoplasmic; it reads ARRLLKPAYGTTGGLPRAKRKS. The chain crosses the membrane as a helical span at residues 116 to 136; the sequence is VRTIALVLAVFTLCFLPFHVT. Residues 137–159 lie on the Extracellular side of the membrane; the sequence is RTLYYSFRSLDLSCHTLNAINMA. A helical membrane pass occupies residues 160–166; that stretch reads YKITRPL.

It belongs to the G-protein coupled receptor 1 family.

It is found in the cell membrane. Its function is as follows. Receptor for ATP and UTP coupled to G-proteins that activate a phosphatidylinositol-calcium second messenger system. In Cricetulus griseus (Chinese hamster), this protein is P2Y purinoceptor 2 (P2RY2).